The sequence spans 425 residues: Adenylosuccinate synthetase (425 aa).

Residues 12–18 and 40–42 contribute to the GTP site; these read GDEGKGK and GHT. D13 (proton acceptor) is an active-site residue. Residues D13 and G40 each contribute to the Mg(2+) site. Residues 13–16, 38–41, T130, R144, Q224, T239, and R301 each bind IMP; these read DEGK and NAGH. The Proton donor role is filled by H41. 297–303 contributes to the substrate binding site; sequence TVSNRRR. Residues R303, 329–331, and 411–413 each bind GTP; these read KLD and STS.

Belongs to the adenylosuccinate synthetase family. Homodimer. Mg(2+) is required as a cofactor.

The protein resides in the cytoplasm. It carries out the reaction IMP + L-aspartate + GTP = N(6)-(1,2-dicarboxyethyl)-AMP + GDP + phosphate + 2 H(+). It functions in the pathway purine metabolism; AMP biosynthesis via de novo pathway; AMP from IMP: step 1/2. Plays an important role in the de novo pathway of purine nucleotide biosynthesis. Catalyzes the first committed step in the biosynthesis of AMP from IMP. This chain is Adenylosuccinate synthetase, found in Wolbachia pipientis wMel.